The sequence spans 333 residues: Glycerol-3-phosphate dehydrogenase [NAD(P)+] (333 aa).

Residues phenylalanine 19, arginine 40, arginine 41, and lysine 113 each coordinate NADPH. Residues lysine 113 and glycine 141 each contribute to the sn-glycerol 3-phosphate site. Position 145 (alanine 145) interacts with NADPH. Positions 196, 249, 259, 260, and 261 each coordinate sn-glycerol 3-phosphate. Lysine 196 (proton acceptor) is an active-site residue. NADPH is bound at residue arginine 260. NADPH is bound by residues valine 282 and glutamate 283.

It belongs to the NAD-dependent glycerol-3-phosphate dehydrogenase family.

The protein resides in the cytoplasm. The catalysed reaction is sn-glycerol 3-phosphate + NAD(+) = dihydroxyacetone phosphate + NADH + H(+). It carries out the reaction sn-glycerol 3-phosphate + NADP(+) = dihydroxyacetone phosphate + NADPH + H(+). The protein operates within membrane lipid metabolism; glycerophospholipid metabolism. Its function is as follows. Catalyzes the reduction of the glycolytic intermediate dihydroxyacetone phosphate (DHAP) to sn-glycerol 3-phosphate (G3P), the key precursor for phospholipid synthesis. The polypeptide is Glycerol-3-phosphate dehydrogenase [NAD(P)+] (Sinorhizobium fredii (strain NBRC 101917 / NGR234)).